A 313-amino-acid polypeptide reads, in one-letter code: tRNA pseudouridine synthase B (313 aa).

A substrate-binding site is contributed by His-44. Residue Asp-49 is the Nucleophile of the active site. Residues Tyr-77, Tyr-180, and Leu-201 each coordinate substrate.

Belongs to the pseudouridine synthase TruB family. Type 1 subfamily.

The enzyme catalyses uridine(55) in tRNA = pseudouridine(55) in tRNA. Functionally, responsible for synthesis of pseudouridine from uracil-55 in the psi GC loop of transfer RNAs. The protein is tRNA pseudouridine synthase B of Hamiltonella defensa subsp. Acyrthosiphon pisum (strain 5AT).